The following is a 270-amino-acid chain: Cyclic AMP-dependent transcription factor ATF-1 (270 aa).

The tract at residues 1-91 (MEDSHKSNTS…DGENPGVSAV (91 aa)) is disordered. Positions 9–21 (TSETAPQSGSTVQ) are enriched in polar residues. The 60-residue stretch at 31–90 (QVSSLSESEESQDSSDSIGSSQKTHGILARRPSYRKILKDLSSEDIRGRKGDGENPGVSA) folds into the KID domain. At serine 63 the chain carries Phosphoserine; by CaMK1, CDK3, RPS6KA4 and RPS6KA5. Residues 67 to 83 (ILKDLSSEDIRGRKGDG) are compositionally biased toward basic and acidic residues. Residue serine 197 is modified to Phosphoserine; by HIPK2. Residues lysine 207 and lysine 214 each participate in a glycyl lysine isopeptide (Lys-Gly) (interchain with G-Cter in SUMO2) cross-link. Residues 212–270 (QLKREIRLMKNREAARECRRKKKEYVKCLENRVAVLENQNKTLIEELKTLKDLYSNKSV) form the bZIP domain. The segment at 214 to 238 (KREIRLMKNREAARECRRKKKEYVK) is basic motif. The tract at residues 240–261 (LENRVAVLENQNKTLIEELKTL) is leucine-zipper.

Belongs to the bZIP family. ATF subfamily. Binds DNA as a dimer. Interacts with HIPK2 and CDK3. Interacts with MOTS-c, a peptide produced by the mitochondrially encoded 12S rRNA MT-RNR1; the interaction occurs in the nucleus following metabolic stress. Post-translationally, phosphorylated at Ser-197 by HIPK2 in response to genotoxic stress. This phosphorylation promotes transcription repression of FTH1 and other antioxidant detoxification genes. The CDK3-mediated phosphorylation at Ser-63 promotes its transactivation and transcriptional activities. Phosphorylated at Ser-63 by RPS6KA4 and RPS6KA5 in response to mitogenic or stress stimuli.

The protein resides in the nucleus. This protein binds the cAMP response element (CRE) (consensus: 5'-GTGACGT[AC][AG]-3'), a sequence present in many viral and cellular promoters. Mediates PKA-induced stimulation of CRE-reporter genes. Represses the expression of FTH1 and other antioxidant detoxification genes. Triggers cell proliferation and transformation. This chain is Cyclic AMP-dependent transcription factor ATF-1 (ATF1), found in Bos taurus (Bovine).